The sequence spans 305 residues: Glycine--tRNA ligase alpha subunit (305 aa).

This sequence belongs to the class-II aminoacyl-tRNA synthetase family. Tetramer of two alpha and two beta subunits.

It is found in the cytoplasm. It carries out the reaction tRNA(Gly) + glycine + ATP = glycyl-tRNA(Gly) + AMP + diphosphate. In Streptococcus suis (strain 05ZYH33), this protein is Glycine--tRNA ligase alpha subunit.